Here is a 636-residue protein sequence, read N- to C-terminus: Cysteine-rich receptor-like protein kinase 24 (636 aa).

A signal peptide spans 1-20; sequence MVKFLVIFWFVVISFSHVSA. 2 Gnk2-homologous domains span residues 21-124 and 130-235; these read QVCL…NRSF and MEIL…LYPF. At 21–254 the chain is on the extracellular side; that stretch reads QVCLERSGFF…RQKDGKSIST (234 aa). N-linked (GlcNAc...) asparagine glycans are attached at residues Asn-33, Asn-50, Asn-98, Asn-101, Asn-121, Asn-137, Asn-145, and Asn-197. The chain crosses the membrane as a helical span at residues 255-275; the sequence is GAIVAIIVVPILLLALGVGLW. Residues 276 to 636 lie on the Cytoplasmic side of the membrane; the sequence is KRRKAYKTKT…SVSVTCVSPR (361 aa). One can recognise a Protein kinase domain in the interval 312–585; that stretch reads FHNVNKLGHG…TMSTVFHMLT (274 aa). ATP is bound by residues 318-326 and Lys-340; that span reads LGHGGFGEV. Asp-437 (proton acceptor) is an active-site residue.

The protein belongs to the protein kinase superfamily. Ser/Thr protein kinase family. CRK subfamily.

The protein resides in the membrane. It carries out the reaction L-seryl-[protein] + ATP = O-phospho-L-seryl-[protein] + ADP + H(+). It catalyses the reaction L-threonyl-[protein] + ATP = O-phospho-L-threonyl-[protein] + ADP + H(+). The polypeptide is Cysteine-rich receptor-like protein kinase 24 (CRK24) (Arabidopsis thaliana (Mouse-ear cress)).